We begin with the raw amino-acid sequence, 37 residues long: MKIRASVRKICTKCRLIRRRGRIIVICSNPRHKQRQG.

It belongs to the bacterial ribosomal protein bL36 family.

It localises to the plastid. Its subcellular location is the chloroplast. This Oenothera argillicola (Appalachian evening primrose) protein is Large ribosomal subunit protein bL36c.